Consider the following 183-residue polypeptide: Peptide deformylase (183 aa).

Residues C110 and H153 each coordinate Fe cation. E154 is a catalytic residue. Residue H157 participates in Fe cation binding.

This sequence belongs to the polypeptide deformylase family. Fe(2+) serves as cofactor.

The catalysed reaction is N-terminal N-formyl-L-methionyl-[peptide] + H2O = N-terminal L-methionyl-[peptide] + formate. Its function is as follows. Removes the formyl group from the N-terminal Met of newly synthesized proteins. Requires at least a dipeptide for an efficient rate of reaction. N-terminal L-methionine is a prerequisite for activity but the enzyme has broad specificity at other positions. This Oceanobacillus iheyensis (strain DSM 14371 / CIP 107618 / JCM 11309 / KCTC 3954 / HTE831) protein is Peptide deformylase.